We begin with the raw amino-acid sequence, 598 residues long: Aluminum-activated malate transporter 9 (598 aa).

Helical transmembrane passes span 88–108 (IVFSAKIGLALTIVALLIFYQ), 117–137 (YSVWAILTVVVVFEFTIGATL), 144–164 (ALGTLSAGGLALGMAELSTLF), 170–190 (IFCTLSIFCIGFLATFMKLYP), 194–214 (AYEYGFRVFLLTYCYILISGF), and 227–247 (FLLIALGAGVSLGVNMFIYPI).

Belongs to the aromatic acid exporter (TC 2.A.85) family. Expressed in hypocotyls, leaves, roots, flowers, sepals and stamina. In leaves, expressed almost exclusively in mesophyll cells.

It localises to the vacuole membrane. With respect to regulation, slow activation by external aluminum. Functionally, vacuolar malate channel. Has a higher selectivity for malate than for fumarate. Also exhibits a weak chloride conductance. The polypeptide is Aluminum-activated malate transporter 9 (ALMT9) (Arabidopsis thaliana (Mouse-ear cress)).